A 1337-amino-acid chain; its full sequence is ATP-dependent helicase/nuclease subunit A (1337 aa).

Residues 3–484 (FTPSKEQEPA…LDLSDNYRSR (482 aa)) form the UvrD-like helicase ATP-binding domain. 24–31 (ASAGSGKT) is an ATP binding site. A UvrD-like helicase C-terminal domain is found at 522–867 (ADRDQASPAT…NVMTIHKSKG (346 aa)).

This sequence belongs to the helicase family. AddA subfamily. Heterodimer of AddA and AddB/RexB. Mg(2+) serves as cofactor.

The enzyme catalyses Couples ATP hydrolysis with the unwinding of duplex DNA by translocating in the 3'-5' direction.. The catalysed reaction is ATP + H2O = ADP + phosphate + H(+). The heterodimer acts as both an ATP-dependent DNA helicase and an ATP-dependent, dual-direction single-stranded exonuclease. Recognizes the chi site generating a DNA molecule suitable for the initiation of homologous recombination. The AddA nuclease domain is required for chi fragment generation; this subunit has the helicase and 3' -&gt; 5' nuclease activities. The chain is ATP-dependent helicase/nuclease subunit A from Limosilactobacillus fermentum (strain NBRC 3956 / LMG 18251) (Lactobacillus fermentum).